A 1177-amino-acid chain; its full sequence is Lon protease homolog, mitochondrial (1177 aa).

Disordered regions lie at residues 72–197 (RTNS…KSPA) and 353–386 (AKKA…DSST). Residues 103-150 (RGRELWVQEKDKSDKPEKSDKPDKTDKTDKDKPEKQDKDKTDKPEKTK) show a composition bias toward basic and acidic residues. Low complexity predominate over residues 154 to 182 (TPSSTASTGAGEAAAPPSAPPSGSGSSSS). The Lon N-terminal domain occupies 203–505 (ILAVPISDRP…RALILLKREH (303 aa)). Basic and acidic residues predominate over residues 353-383 (AKKAKSGKTEDSKHDSKVTSKDGKETTEKYD). An ATP-binding site is contributed by 657 to 664 (GPPGVGKT). The span at 883–916 (EKDKESAEKKTTKSKSKEVNEEPAAKEEKDKATE) shows a compositional bias: basic and acidic residues. The interval 883–932 (EKDKESAEKKTTKSKSKEVNEEPAAKEEKDKATESAESSETKVGTKAPPV) is disordered. The 187-residue stretch at 964-1150 (DPPPGVVMGL…QDVYDVVFQG (187 aa)) folds into the Lon proteolytic domain. Catalysis depends on residues Ser1056 and Lys1099.

Belongs to the peptidase S16 family. Homohexamer or homoheptamer. Organized in a ring with a central cavity.

The protein resides in the mitochondrion matrix. The enzyme catalyses Hydrolysis of proteins in presence of ATP.. ATP-dependent serine protease that mediates the selective degradation of misfolded, unassembled or oxidatively damaged polypeptides as well as certain short-lived regulatory proteins in the mitochondrial matrix. May also have a chaperone function in the assembly of inner membrane protein complexes. Participates in the regulation of mitochondrial gene expression and in the maintenance of the integrity of the mitochondrial genome. Binds to mitochondrial DNA in a site-specific manner. The chain is Lon protease homolog, mitochondrial from Yarrowia lipolytica (strain CLIB 122 / E 150) (Yeast).